A 665-amino-acid chain; its full sequence is BTB/POZ domain-containing protein At1g30440 (665 aa).

Positions 28-98 constitute a BTB domain; it reads SDIVVEVGEM…CYGVKLELTA (71 aa). Positions 214–508 constitute an NPH3 domain; it reads DWWYEDASML…VQVLFFEQLQ (295 aa). Residues 260-280 form a disordered region; sequence LKRRRGGPESSGRFSTPLGSG. Polar residues predominate over residues 271–280; it reads GRFSTPLGSG. At Ser-279 the chain carries Phosphoserine. Positions 281–306 form a coiled coil; it reads NVLSEEEQKNLLEEIQELLRMQKGLV. Phosphotyrosine is present on Tyr-449. Over residues 626-639 the composition is skewed to polar residues; the sequence is SAQEGSVSKSNNEN. Residues 626-665 are disordered; that stretch reads SAQEGSVSKSNNENVKIEKLKDVKERRGKHKKASSISSER. The span at 640–650 shows a compositional bias: basic and acidic residues; that stretch reads VKIEKLKDVKE.

Belongs to the NPH3 family.

It participates in protein modification; protein ubiquitination. May act as a substrate-specific adapter of an E3 ubiquitin-protein ligase complex (CUL3-RBX1-BTB) which mediates the ubiquitination and subsequent proteasomal degradation of target proteins. The chain is BTB/POZ domain-containing protein At1g30440 from Arabidopsis thaliana (Mouse-ear cress).